Here is a 310-residue protein sequence, read N- to C-terminus: E3 ubiquitin-protein ligase AIP2 (310 aa).

The RING-type; atypical zinc finger occupies 230–271; sequence CCICKENLVIGDKMQELPCKHTFHPPCLKPWLDEHNSCPICR. Residues 276–306 adopt a coiled-coil conformation; that stretch reads TDDQKYENWKEREKEAEEERKGAENAVRGGE. Positions 285-298 are enriched in basic and acidic residues; it reads KEREKEAEEERKGA. A disordered region spans residues 285 to 310; it reads KEREKEAEEERKGAENAVRGGEYMYV.

In terms of assembly, interacts with ABI3 (via C-terminus). In terms of processing, auto-ubiquitinated. Highly expressed in leaves and at lower levels in flowers and seeds.

The protein resides in the nucleus. The protein localises to the cytoplasm. It carries out the reaction S-ubiquitinyl-[E2 ubiquitin-conjugating enzyme]-L-cysteine + [acceptor protein]-L-lysine = [E2 ubiquitin-conjugating enzyme]-L-cysteine + N(6)-ubiquitinyl-[acceptor protein]-L-lysine.. It functions in the pathway protein modification; protein ubiquitination. Its function is as follows. E3 ubiquitin-protein ligase that acts as a negative regulator of abscisic acid (ABA) signaling. Mediates ubiquitination and subsequent proteasomal degradation of the transcription factor ABI3. The sequence is that of E3 ubiquitin-protein ligase AIP2 (AIP2) from Arabidopsis thaliana (Mouse-ear cress).